A 583-amino-acid chain; its full sequence is Pre-mRNA-processing protein 45 (583 aa).

Disordered regions lie at residues 1–68 (MTSI…APED), 177–253 (KPKN…LTAE), 321–424 (MQQR…EQNR), and 519–583 (RGAA…DEEN). Residues 203 to 225 (TSRKNDRIMKIVERQQDPMEPPK) are compositionally biased toward basic and acidic residues. Over residues 233–244 (RGPPSPPPPIMH) the composition is skewed to pro residues. The segment covering 325-350 (LAEKEKAQKEEHLRALAQKAREERSR) has biased composition (basic and acidic residues). Residues 367 to 377 (RSYSDASSRSR) are compositionally biased toward low complexity. Composition is skewed to basic and acidic residues over residues 386–424 (ARER…EQNR), 519–538 (RGAA…KDTA), and 569–583 (PDSR…DEEN).

Belongs to the SNW family. As to quaternary structure, associated with the spliceosome.

It is found in the nucleus. In terms of biological role, involved in pre-mRNA splicing. The polypeptide is Pre-mRNA-processing protein 45 (prp45) (Emericella nidulans (strain FGSC A4 / ATCC 38163 / CBS 112.46 / NRRL 194 / M139) (Aspergillus nidulans)).